Consider the following 541-residue polypeptide: ATP synthase subunit alpha (541 aa).

169–176 is an ATP binding site; it reads GDRQTGKT. A disordered region spans residues 506–541; the sequence is NTLLNVEEGDTGEEENNEGHNKAEQDTEEKDTEEVV. 2 stretches are compositionally biased toward acidic residues: residues 512–521 and 531–541; these read EEGDTGEEEN and DTEEKDTEEVV.

Belongs to the ATPase alpha/beta chains family. In terms of assembly, F-type ATPases have 2 components, CF(1) - the catalytic core - and CF(0) - the membrane proton channel. CF(1) has five subunits: alpha(3), beta(3), gamma(1), delta(1), epsilon(1). CF(0) has three main subunits: a(1), b(2) and c(9-12). The alpha and beta chains form an alternating ring which encloses part of the gamma chain. CF(1) is attached to CF(0) by a central stalk formed by the gamma and epsilon chains, while a peripheral stalk is formed by the delta and b chains.

It localises to the cell inner membrane. The catalysed reaction is ATP + H2O + 4 H(+)(in) = ADP + phosphate + 5 H(+)(out). Functionally, produces ATP from ADP in the presence of a proton gradient across the membrane. The alpha chain is a regulatory subunit. The sequence is that of ATP synthase subunit alpha from Halothermothrix orenii (strain H 168 / OCM 544 / DSM 9562).